A 763-amino-acid polypeptide reads, in one-letter code: Dual specificity tyrosine-phosphorylation-regulated kinase 1A (763 aa).

Residue Ser14 is modified to Phosphoserine. Residues 33-56 are disordered; that stretch reads QMPHSHQYSDRRQPNISDQQVSAL. Residues 46-56 are compositionally biased toward polar residues; that stretch reads PNISDQQVSAL. A Phosphotyrosine; by autocatalysis modification is found at Tyr111. Residues 115-136 are disordered; that stretch reads KKRRHQQGQGDDSSHKKERKVY. The short motif at 117-134 is the Bipartite nuclear localization signal element; that stretch reads RRHQQGQGDDSSHKKERK. Tyr140 carries the phosphotyrosine; by autocatalysis modification. Position 145 is a phosphotyrosine (Tyr145). Tyr159 is subject to Phosphotyrosine; by autocatalysis. A Protein kinase domain is found at 159–479; that stretch reads YEIDSLIGKG…PYYALQHSFF (321 aa). 165-173 serves as a coordination point for ATP; that stretch reads IGKGSFGQV. Tyr177 is subject to Phosphotyrosine; by autocatalysis. Lys188 is an ATP binding site. Tyr219 is subject to Phosphotyrosine; by autocatalysis. 238–241 lines the ATP pocket; that stretch reads FEML. Residue Asp287 is the Proton acceptor of the active site. Ser310 is modified (phosphoserine; by autocatalysis). Tyr319 and Tyr321 each carry phosphotyrosine; by autocatalysis. Position 402 is a phosphothreonine; by autocatalysis (Thr402). Residues 408 to 442 form a disordered region; the sequence is TKDGKREYKPPGTRKLHNILGVETGGPGGRRAGES. Tyr449 is modified (phosphotyrosine; by autocatalysis). Positions 485-501 are enriched in polar residues; the sequence is EGTNTSNSVSTSPAMEQ. Disordered regions lie at residues 485–540, 596–679, and 744–763; these read EGTN…HSGG, NALH…GNQA, and DREE…VASS. The segment covering 502–525 has biased composition (low complexity); that stretch reads SQSSGTTSSTSSSSGGSSGTSNSG. A phosphoserine mark is found at Ser529 and Ser538. The segment at 595–625 is histidine-rich domain (HRD); that stretch reads QNALHHHHGNSSHHHHHHHHHHHHHGQQALG. Residues 598 to 620 show a composition bias toward basic residues; the sequence is LHHHHGNSSHHHHHHHHHHHHHG. Over residues 634–645 the composition is skewed to polar residues; it reads NSPTNSSSTQDS. Residues 654–672 are compositionally biased toward low complexity; sequence SMTSLSSSTTSSSTSSSST. Phosphoserine is present on residues Ser748 and Ser758. Polar residues predominate over residues 754–763; sequence CVQQSPVASS.

This sequence belongs to the protein kinase superfamily. CMGC Ser/Thr protein kinase family. MNB/DYRK subfamily. As to quaternary structure, interacts with RAD54L2/ARIP4. Interacts with CRY2. Interacts with RANBP9. Interacts with WDR68. Interacts with SIRT1. Post-translationally, can also autophosphorylate on serine and threonine residues (in vitro). Autophosphorylated on numerous tyrosine residues. Detected in brain (at protein level). Ubiquitous.

The protein resides in the nucleus speckle. The catalysed reaction is L-seryl-[protein] + ATP = O-phospho-L-seryl-[protein] + ADP + H(+). The enzyme catalyses L-threonyl-[protein] + ATP = O-phospho-L-threonyl-[protein] + ADP + H(+). It catalyses the reaction L-tyrosyl-[protein] + ATP = O-phospho-L-tyrosyl-[protein] + ADP + H(+). It carries out the reaction [DNA-directed RNA polymerase] + ATP = phospho-[DNA-directed RNA polymerase] + ADP + H(+). Inhibited by RANBP9. Inhibited by harmine, leucettamine B and leucettine L41. Functionally, dual-specificity kinase which possesses both serine/threonine and tyrosine kinase activities. Exhibits a substrate preference for proline at position P+1 and arginine at position P-3. Plays an important role in double-strand breaks (DSBs) repair following DNA damage. Mechanistically, phosphorylates RNF169 and increases its ability to block accumulation of TP53BP1 at the DSB sites thereby promoting homologous recombination repair (HRR). Also acts as a positive regulator of transcription by acting as a CTD kinase that mediates phosphorylation of the CTD (C-terminal domain) of the large subunit of RNA polymerase II (RNAP II) POLR2A. May play a role in a signaling pathway regulating nuclear functions of cell proliferation. Modulates alternative splicing by phosphorylating the splice factor SRSF6. Has pro-survival function and negatively regulates the apoptotic process. Promotes cell survival upon genotoxic stress through phosphorylation of SIRT1. This in turn inhibits p53/TP53 activity and apoptosis. Phosphorylates SEPTIN4, SEPTIN5 and SF3B1 at 'Thr-434'. The polypeptide is Dual specificity tyrosine-phosphorylation-regulated kinase 1A (Dyrk1a) (Rattus norvegicus (Rat)).